The chain runs to 313 residues: Urease accessory protein UreD (313 aa).

Positions 1 to 30 (MTDLSFPGQAASPGEGAGQTPSGGSGHRFD) are disordered. A compositionally biased stretch (gly residues) spans 15-26 (EGAGQTPSGGSG).

The protein belongs to the UreD family. UreD, UreF and UreG form a complex that acts as a GTP-hydrolysis-dependent molecular chaperone, activating the urease apoprotein by helping to assemble the nickel containing metallocenter of UreC. The UreE protein probably delivers the nickel.

It is found in the cytoplasm. In terms of biological role, required for maturation of urease via the functional incorporation of the urease nickel metallocenter. The chain is Urease accessory protein UreD from Chromohalobacter salexigens (strain ATCC BAA-138 / DSM 3043 / CIP 106854 / NCIMB 13768 / 1H11).